We begin with the raw amino-acid sequence, 1061 residues long: Error-prone DNA polymerase (1061 aa).

Belongs to the DNA polymerase type-C family. DnaE2 subfamily.

The protein resides in the cytoplasm. It carries out the reaction DNA(n) + a 2'-deoxyribonucleoside 5'-triphosphate = DNA(n+1) + diphosphate. In terms of biological role, DNA polymerase involved in damage-induced mutagenesis and translesion synthesis (TLS). It is not the major replicative DNA polymerase. The polypeptide is Error-prone DNA polymerase (Bdellovibrio bacteriovorus (strain ATCC 15356 / DSM 50701 / NCIMB 9529 / HD100)).